Here is a 288-residue protein sequence, read N- to C-terminus: Urease accessory protein UreD 1 (288 aa).

A compositionally biased stretch (pro residues) spans 1 to 10 (MHGPLAPAPS). The segment at 1-35 (MHGPLAPAPSPERLGAAPARQRSDGRIRLRVGPAR) is disordered.

This sequence belongs to the UreD family. As to quaternary structure, ureD, UreF and UreG form a complex that acts as a GTP-hydrolysis-dependent molecular chaperone, activating the urease apoprotein by helping to assemble the nickel containing metallocenter of UreC. The UreE protein probably delivers the nickel.

Its subcellular location is the cytoplasm. In terms of biological role, required for maturation of urease via the functional incorporation of the urease nickel metallocenter. In Methylobacterium radiotolerans (strain ATCC 27329 / DSM 1819 / JCM 2831 / NBRC 15690 / NCIMB 10815 / 0-1), this protein is Urease accessory protein UreD 1.